We begin with the raw amino-acid sequence, 320 residues long: Cytochrome f (320 aa).

The signal sequence occupies residues Met1–Ala35. Heme contacts are provided by Tyr36, Cys56, Cys59, and His60. The helical transmembrane segment at Val286–Lys306 threads the bilayer.

The protein belongs to the cytochrome f family. In terms of assembly, the 4 large subunits of the cytochrome b6-f complex are cytochrome b6, subunit IV (17 kDa polypeptide, petD), cytochrome f and the Rieske protein, while the 4 small subunits are PetG, PetL, PetM and PetN. The complex functions as a dimer. The cofactor is heme.

The protein resides in the plastid. It is found in the chloroplast thylakoid membrane. Functionally, component of the cytochrome b6-f complex, which mediates electron transfer between photosystem II (PSII) and photosystem I (PSI), cyclic electron flow around PSI, and state transitions. In Ceratophyllum demersum (Rigid hornwort), this protein is Cytochrome f.